Consider the following 276-residue polypeptide: NH(3)-dependent NAD(+) synthetase (276 aa).

ATP is bound at residue 51–58; that stretch reads GISGGVDS. Asp57 lines the Mg(2+) pocket. Arg148 lines the deamido-NAD(+) pocket. Thr168 provides a ligand contact to ATP. Residue Glu173 participates in Mg(2+) binding. Positions 181 and 188 each coordinate deamido-NAD(+). Residues Lys197 and Thr219 each coordinate ATP. Residue 268-269 coordinates deamido-NAD(+); the sequence is HK.

Belongs to the NAD synthetase family. As to quaternary structure, homodimer.

It carries out the reaction deamido-NAD(+) + NH4(+) + ATP = AMP + diphosphate + NAD(+) + H(+). The protein operates within cofactor biosynthesis; NAD(+) biosynthesis; NAD(+) from deamido-NAD(+) (ammonia route): step 1/1. Its function is as follows. Catalyzes the ATP-dependent amidation of deamido-NAD to form NAD. Uses ammonia as a nitrogen source. The sequence is that of NH(3)-dependent NAD(+) synthetase from Streptomyces coelicolor (strain ATCC BAA-471 / A3(2) / M145).